We begin with the raw amino-acid sequence, 167 residues long: Large ribosomal subunit protein uL15 (167 aa).

The segment covering 1 to 10 (MKLNQISDNP) has biased composition (polar residues). The segment at 1-37 (MKLNQISDNPGATKDRMRVGRGIGSGKGKTAGRGVKG) is disordered. Residues 21 to 35 (RGIGSGKGKTAGRGV) are compositionally biased toward gly residues.

The protein belongs to the universal ribosomal protein uL15 family. Part of the 50S ribosomal subunit.

Binds to the 23S rRNA. In Methylobacterium radiotolerans (strain ATCC 27329 / DSM 1819 / JCM 2831 / NBRC 15690 / NCIMB 10815 / 0-1), this protein is Large ribosomal subunit protein uL15.